Here is a 1992-residue protein sequence, read N- to C-terminus: Otoferlin (1992 aa).

3 C2 domains span residues 1–98 (MALV…EVSD), 241–362 (KRSK…HKWA), and 405–536 (IEGN…FLPT). Residues 1-1958 (MALVVHLKTV…IRYFIWHNYR (1958 aa)) lie on the Cytoplasmic side of the membrane. Residues 655–699 (PALAKKKKEGGGESEEEESELIHNSSEEEAEDDGDLTSVPSTPPM) form a disordered region. 2 consecutive C2 domains span residues 952–1077 (IQAV…PPRF) and 1124–1250 (RGPI…NNWA). The Ca(2+) site is built by aspartate 984, aspartate 990, aspartate 1046, and aspartate 1048. The stretch at 1282 to 1363 (VKVDLNEDEK…ESAEIKADDF (82 aa)) forms a coiled coil. Disordered regions lie at residues 1288–1311 (EDEK…EEEP) and 1354–1399 (ESAE…KPKV). Basic and acidic residues predominate over residues 1356 to 1399 (AEIKADDFPMKGTKPKEKSKDKKSTKDKKKNNDGTEKRPPKPKV). C2 domains are found at residues 1470 to 1588 (DPNM…ATCG) and 1711 to 1860 (PAPG…KQCS). 8 residues coordinate Ca(2+): aspartate 1503, aspartate 1509, aspartate 1558, aspartate 1560, aspartate 1566, aspartate 1831, serine 1834, and aspartate 1837. The helical transmembrane segment at 1959-1979 (WLILKALALLLLLLLVGLFLY) threads the bilayer. Residues 1980–1992 (SIPGYLVKKLLGA) lie on the Extracellular side of the membrane.

This sequence belongs to the ferlin family. The cofactor is Ca(2+).

The protein resides in the cytoplasmic vesicle. The protein localises to the secretory vesicle. It localises to the synaptic vesicle membrane. Its subcellular location is the basolateral cell membrane. It is found in the endoplasmic reticulum membrane. The protein resides in the golgi apparatus membrane. The protein localises to the presynaptic cell membrane. It localises to the cell membrane. Functionally, key calcium ion sensor involved in the Ca(2+)-triggered synaptic vesicle-plasma membrane fusion and in the control of neurotransmitter release at these output synapses. The chain is Otoferlin (otof) from Danio rerio (Zebrafish).